The primary structure comprises 261 residues: uncharacterized protein (261 aa).

Residues 1–22 form the signal peptide; that stretch reads MIHSKKLTLGICLVLLIILIGG. Cysteine 23 carries N-palmitoyl cysteine lipidation. Cysteine 23 carries the S-diacylglycerol cysteine lipid modification.

Belongs to the staphylococcal tandem lipoprotein family.

The protein localises to the cell membrane. This is an uncharacterized protein from Staphylococcus aureus (strain USA300).